An 88-amino-acid polypeptide reads, in one-letter code: Small ribosomal subunit protein bS18B (88 aa).

It belongs to the bacterial ribosomal protein bS18 family. In terms of assembly, part of the 30S ribosomal subunit. Forms a tight heterodimer with protein bS6.

In terms of biological role, binds as a heterodimer with protein bS6 to the central domain of the 16S rRNA, where it helps stabilize the platform of the 30S subunit. This chain is Small ribosomal subunit protein bS18B (rpsR2), found in Mycobacterium bovis (strain ATCC BAA-935 / AF2122/97).